The following is a 572-amino-acid chain: Urease subunit alpha (572 aa).

Positions 134–572 constitute a Urease domain; the sequence is GGIDSHIHFI…LPLTQRYFLF (439 aa). Ni(2+) is bound by residues histidine 139, histidine 141, and lysine 222. At lysine 222 the chain carries N6-carboxylysine. Histidine 224 contacts substrate. The Ni(2+) site is built by histidine 251 and histidine 277. Histidine 325 acts as the Proton donor in catalysis. Residue aspartate 365 coordinates Ni(2+).

Belongs to the metallo-dependent hydrolases superfamily. Urease alpha subunit family. As to quaternary structure, heterotrimer of UreA (gamma), UreB (beta) and UreC (alpha) subunits. Three heterotrimers associate to form the active enzyme. Requires Ni cation as cofactor. Post-translationally, carboxylation allows a single lysine to coordinate two nickel ions.

The protein resides in the cytoplasm. It catalyses the reaction urea + 2 H2O + H(+) = hydrogencarbonate + 2 NH4(+). The protein operates within nitrogen metabolism; urea degradation; CO(2) and NH(3) from urea (urease route): step 1/1. In Variovorax paradoxus (strain S110), this protein is Urease subunit alpha.